Here is a 330-residue protein sequence, read N- to C-terminus: Aspartate--ammonia ligase (330 aa).

The protein belongs to the class-II aminoacyl-tRNA synthetase family. AsnA subfamily.

The protein resides in the cytoplasm. The catalysed reaction is L-aspartate + NH4(+) + ATP = L-asparagine + AMP + diphosphate + H(+). It participates in amino-acid biosynthesis; L-asparagine biosynthesis; L-asparagine from L-aspartate (ammonia route): step 1/1. The protein is Aspartate--ammonia ligase of Escherichia coli O8 (strain IAI1).